We begin with the raw amino-acid sequence, 549 residues long: Hydroxylamine reductase (549 aa).

[4Fe-4S] cluster contacts are provided by Cys5, Cys8, Cys17, and Cys23. Hybrid [4Fe-2O-2S] cluster contacts are provided by His244, Glu268, Cys312, Cys403, Cys431, Cys456, Glu491, and Lys493. At Cys403 the chain carries Cysteine persulfide.

This sequence belongs to the HCP family. The cofactor is [4Fe-4S] cluster. Requires hybrid [4Fe-2O-2S] cluster as cofactor.

Its subcellular location is the cytoplasm. The enzyme catalyses A + NH4(+) + H2O = hydroxylamine + AH2 + H(+). Functionally, catalyzes the reduction of hydroxylamine to form NH(3) and H(2)O. In Caldanaerobacter subterraneus subsp. tengcongensis (strain DSM 15242 / JCM 11007 / NBRC 100824 / MB4) (Thermoanaerobacter tengcongensis), this protein is Hydroxylamine reductase.